We begin with the raw amino-acid sequence, 181 residues long: Large ribosomal subunit protein uL6 (181 aa).

This sequence belongs to the universal ribosomal protein uL6 family. Part of the 50S ribosomal subunit.

Functionally, this protein binds to the 23S rRNA, and is important in its secondary structure. It is located near the subunit interface in the base of the L7/L12 stalk, and near the tRNA binding site of the peptidyltransferase center. This is Large ribosomal subunit protein uL6 from Flavobacterium psychrophilum (strain ATCC 49511 / DSM 21280 / CIP 103535 / JIP02/86).